The following is a 192-amino-acid chain: AYSWDNRVKYVVRYMYDIDDDGFLDKNDFECLAVRNTLIEGRGEFSAADYANNQKIMRNLWNEIAELADFNKDGEVTVDEFKMAVQKHCQGKKYSEFPGAFKVFIANQFKAIDVNGDGKVGLDEYRLDCITRSAFAEVKEIDDAYDKLTTEDDRKAGGLTLERYQDLYAQFISNPNESCSACFLFGPLKVVQ.

Alanine 1 carries the N-acetylalanine modification. 4 EF-hand domains span residues 4–39, 56–91, 100–135, and 136–171; these read WDNR…NTLI, IMRN…HCQG, AFKV…RSAF, and AEVK…YAQF. Ca(2+)-binding residues include aspartate 17, aspartate 19, aspartate 21, aspartate 28, aspartate 69, asparagine 71, aspartate 73, glutamate 75, glutamate 80, aspartate 113, asparagine 115, aspartate 117, lysine 119, and glutamate 124.

As to quaternary structure, SCPs from crayfish, lobster, and shrimp are polymorphic dimers; three isotypes (alpha-alpha, alpha-beta, and beta-beta) have been identified.

In terms of biological role, like parvalbumins, SCPs seem to be more abundant in fast contracting muscles, but no functional relationship can be established from this distribution. This Penaeus sp. (Penoeid shrimp) protein is Sarcoplasmic calcium-binding protein, alpha-B and -A chains.